The chain runs to 839 residues: Amyloid-beta A4 precursor protein-binding family A member 1 (839 aa).

3 disordered regions span residues 1–118 (MNHL…DESA), 235–346 (RLHH…EKRD), and 362–437 (VKTR…ESRK). Residues 23 to 38 (ESVEADLEHPEVEEEQ) show a composition bias toward acidic residues. Ser79 is subject to Phosphoserine. Composition is skewed to basic and acidic residues over residues 103–112 (DGYEAERAQD) and 237–255 (HHYD…KEAE). Residues 227–315 (YRQEALGARL…TPGGGHPDSP (89 aa)) are munc-18-1 binding. Residues Ser243, Ser247, Ser249, Ser264, Ser281, and Ser286 each carry the phosphoserine modification. Thr306 is modified (phosphothreonine). Phosphoserine occurs at positions 314 and 369. Thr372 is subject to Phosphothreonine. Residues 375–438 (EPKEPIWVMR…ASTNKESRKS (64 aa)) form an LIN-2/CASK binding region. The span at 389–400 (PTRDCDDQRPVD) shows a compositional bias: basic and acidic residues. The span at 401–417 (GDSPSPGSSSPLGAESS) shows a compositional bias: low complexity. Phosphoserine occurs at positions 403, 405, 410, and 570. Positions 459–645 (DGIIFAANYL…LLNTQDMYND (187 aa)) constitute a PID domain. The interval 628 to 643 (LSQKEYSDLLNTQDMY) is autoinhibitory helix linker. PDZ domains follow at residues 658–744 (DVFI…IVRC) and 749–824 (TVLI…TMPA).

As to quaternary structure, part of a multimeric complex containing STXBP1 and STX1A. Interacts with STXBP1. Component of the brain-specific heterotrimeric complex (LIN-10-LIN-2-LIN-7 complex) composed of at least APBA1, CASK, and LIN7, which associates with the motor protein KIF17 to transport vesicles along microtubules. Within the complex, interacts (via PDZ domain) with the motor protein KIF17; the interaction is direct and is required for association of KIF17 with the cargo that is to be transported. Binds to the cytoplasmic domain of amyloid protein (APP). Interacts (via PDZ 1 and 2 domains) with FSPB. Isoform 2 interacts (via its truncated PID domain) with active, GTP-bound RAB6A and RAB6B. Brain. Detected in the cerebellum, hippocampus, olfactory system, piriform and entorhinal cortex, supraoptic nucleus of the hypothalamus, substantia nigra, and other mesencephalic areas.

The protein resides in the cytoplasm. The protein localises to the perinuclear region. Its subcellular location is the nucleus. It is found in the golgi apparatus. Functionally, putative function in synaptic vesicle exocytosis by binding to Munc18-1, an essential component of the synaptic vesicle exocytotic machinery. May modulate processing of the amyloid-beta precursor protein (APP) and hence formation of APP-beta. The polypeptide is Amyloid-beta A4 precursor protein-binding family A member 1 (Apba1) (Rattus norvegicus (Rat)).